The sequence spans 69 residues: MKNKSKYREMSYKELVSKRNDLKQKYMDLRFQAVVGHLDNPLEKRSMRREIAMLNTFIRQKELAGEGAN.

It belongs to the universal ribosomal protein uL29 family.

The chain is Large ribosomal subunit protein uL29 from Treponema denticola (strain ATCC 35405 / DSM 14222 / CIP 103919 / JCM 8153 / KCTC 15104).